The chain runs to 82 residues: DNA-directed RNA polymerase subunit Rpo5 (82 aa).

The protein belongs to the archaeal Rpo5/eukaryotic RPB5 RNA polymerase subunit family. As to quaternary structure, part of the RNA polymerase complex.

Its subcellular location is the cytoplasm. It carries out the reaction RNA(n) + a ribonucleoside 5'-triphosphate = RNA(n+1) + diphosphate. In terms of biological role, DNA-dependent RNA polymerase (RNAP) catalyzes the transcription of DNA into RNA using the four ribonucleoside triphosphates as substrates. In Thermococcus kodakarensis (strain ATCC BAA-918 / JCM 12380 / KOD1) (Pyrococcus kodakaraensis (strain KOD1)), this protein is DNA-directed RNA polymerase subunit Rpo5.